Consider the following 487-residue polypeptide: Protein nucleotidyltransferase YdiU (487 aa).

Positions 85, 87, 88, 108, 120, 121, 171, and 178 each coordinate ATP. Residue Asp-247 is the Proton acceptor of the active site. Asn-248 and Asp-257 together coordinate Mg(2+). Asp-257 serves as a coordination point for ATP.

Belongs to the SELO family. Mg(2+) serves as cofactor. The cofactor is Mn(2+).

It catalyses the reaction L-seryl-[protein] + ATP = 3-O-(5'-adenylyl)-L-seryl-[protein] + diphosphate. The catalysed reaction is L-threonyl-[protein] + ATP = 3-O-(5'-adenylyl)-L-threonyl-[protein] + diphosphate. The enzyme catalyses L-tyrosyl-[protein] + ATP = O-(5'-adenylyl)-L-tyrosyl-[protein] + diphosphate. It carries out the reaction L-histidyl-[protein] + UTP = N(tele)-(5'-uridylyl)-L-histidyl-[protein] + diphosphate. It catalyses the reaction L-seryl-[protein] + UTP = O-(5'-uridylyl)-L-seryl-[protein] + diphosphate. The catalysed reaction is L-tyrosyl-[protein] + UTP = O-(5'-uridylyl)-L-tyrosyl-[protein] + diphosphate. Functionally, nucleotidyltransferase involved in the post-translational modification of proteins. It can catalyze the addition of adenosine monophosphate (AMP) or uridine monophosphate (UMP) to a protein, resulting in modifications known as AMPylation and UMPylation. The polypeptide is Protein nucleotidyltransferase YdiU (Agrobacterium fabrum (strain C58 / ATCC 33970) (Agrobacterium tumefaciens (strain C58))).